The sequence spans 367 residues: Glutamate 5-kinase (367 aa).

ATP is bound at residue K10. Substrate is bound by residues S50, D137, and N149. Residues T169 to D170 and T211 to K217 each bind ATP. Residues A275–E353 enclose the PUA domain.

Belongs to the glutamate 5-kinase family.

Its subcellular location is the cytoplasm. It catalyses the reaction L-glutamate + ATP = L-glutamyl 5-phosphate + ADP. It functions in the pathway amino-acid biosynthesis; L-proline biosynthesis; L-glutamate 5-semialdehyde from L-glutamate: step 1/2. Catalyzes the transfer of a phosphate group to glutamate to form L-glutamate 5-phosphate. This is Glutamate 5-kinase from Serratia proteamaculans (strain 568).